Consider the following 48-residue polypeptide: Cuticle protein 6 isoform b (48 aa).

This is Cuticle protein 6 isoform b from Limulus polyphemus (Atlantic horseshoe crab).